The sequence spans 217 residues: Imidazole glycerol phosphate synthase subunit HisH (217 aa).

A Glutamine amidotransferase type-1 domain is found at 6–214 (QIAVVDYDMG…VTQVAAAQLQ (209 aa)). The active-site Nucleophile is the C84. Residues H189 and E191 contribute to the active site.

Heterodimer of HisH and HisF.

The protein localises to the cytoplasm. The catalysed reaction is 5-[(5-phospho-1-deoxy-D-ribulos-1-ylimino)methylamino]-1-(5-phospho-beta-D-ribosyl)imidazole-4-carboxamide + L-glutamine = D-erythro-1-(imidazol-4-yl)glycerol 3-phosphate + 5-amino-1-(5-phospho-beta-D-ribosyl)imidazole-4-carboxamide + L-glutamate + H(+). It catalyses the reaction L-glutamine + H2O = L-glutamate + NH4(+). It participates in amino-acid biosynthesis; L-histidine biosynthesis; L-histidine from 5-phospho-alpha-D-ribose 1-diphosphate: step 5/9. IGPS catalyzes the conversion of PRFAR and glutamine to IGP, AICAR and glutamate. The HisH subunit catalyzes the hydrolysis of glutamine to glutamate and ammonia as part of the synthesis of IGP and AICAR. The resulting ammonia molecule is channeled to the active site of HisF. The chain is Imidazole glycerol phosphate synthase subunit HisH from Synechococcus sp. (strain ATCC 27144 / PCC 6301 / SAUG 1402/1) (Anacystis nidulans).